We begin with the raw amino-acid sequence, 190 residues long: UPF0398 protein LAR_0869 (190 aa).

It belongs to the UPF0398 family.

This Limosilactobacillus reuteri subsp. reuteri (strain JCM 1112) (Lactobacillus reuteri) protein is UPF0398 protein LAR_0869.